A 161-amino-acid chain; its full sequence is Phosphopantetheine adenylyltransferase (161 aa).

Thr-9 provides a ligand contact to substrate. Residues 9 to 10 and His-17 each bind ATP; that span reads TF. Substrate is bound by residues Lys-41, Leu-73, and Arg-87. Residues 88–90, Glu-98, and 123–129 each bind ATP; these read GLR and YSFISST.

The protein belongs to the bacterial CoaD family. Homohexamer. Requires Mg(2+) as cofactor.

Its subcellular location is the cytoplasm. The catalysed reaction is (R)-4'-phosphopantetheine + ATP + H(+) = 3'-dephospho-CoA + diphosphate. It functions in the pathway cofactor biosynthesis; coenzyme A biosynthesis; CoA from (R)-pantothenate: step 4/5. Reversibly transfers an adenylyl group from ATP to 4'-phosphopantetheine, yielding dephospho-CoA (dPCoA) and pyrophosphate. The chain is Phosphopantetheine adenylyltransferase from Pseudomonas putida (strain ATCC 47054 / DSM 6125 / CFBP 8728 / NCIMB 11950 / KT2440).